Reading from the N-terminus, the 427-residue chain is Light-independent protochlorophyllide reductase subunit N (427 aa).

[4Fe-4S] cluster-binding residues include cysteine 28, cysteine 53, and cysteine 114.

It belongs to the BchN/ChlN family. As to quaternary structure, protochlorophyllide reductase is composed of three subunits; BchL, BchN and BchB. Forms a heterotetramer of two BchB and two BchN subunits. It depends on [4Fe-4S] cluster as a cofactor.

The catalysed reaction is chlorophyllide a + oxidized 2[4Fe-4S]-[ferredoxin] + 2 ADP + 2 phosphate = protochlorophyllide a + reduced 2[4Fe-4S]-[ferredoxin] + 2 ATP + 2 H2O. The protein operates within porphyrin-containing compound metabolism; bacteriochlorophyll biosynthesis (light-independent). In terms of biological role, component of the dark-operative protochlorophyllide reductase (DPOR) that uses Mg-ATP and reduced ferredoxin to reduce ring D of protochlorophyllide (Pchlide) to form chlorophyllide a (Chlide). This reaction is light-independent. The NB-protein (BchN-BchB) is the catalytic component of the complex. This is Light-independent protochlorophyllide reductase subunit N from Dinoroseobacter shibae (strain DSM 16493 / NCIMB 14021 / DFL 12).